A 356-amino-acid polypeptide reads, in one-letter code: GTPase Obg (356 aa).

Positions 1–159 (MKFLDEAKVY…RWIWLRMKLI (159 aa)) constitute an Obg domain. Residues 160 to 327 (ADAGLVGLPN…ALRKLADVVG (168 aa)) form the OBG-type G domain. Residues 166 to 173 (GLPNAGKS), 191 to 195 (FTTLH), 212 to 215 (DIPG), 279 to 282 (NKID), and 308 to 310 (SGA) contribute to the GTP site. Residues serine 173 and threonine 193 each coordinate Mg(2+). The tract at residues 327-356 (GEQPVSSKAKNAVESAATEEPWAAPVPPQG) is disordered.

Belongs to the TRAFAC class OBG-HflX-like GTPase superfamily. OBG GTPase family. In terms of assembly, monomer. It depends on Mg(2+) as a cofactor.

The protein localises to the cytoplasm. Functionally, an essential GTPase which binds GTP, GDP and possibly (p)ppGpp with moderate affinity, with high nucleotide exchange rates and a fairly low GTP hydrolysis rate. Plays a role in control of the cell cycle, stress response, ribosome biogenesis and in those bacteria that undergo differentiation, in morphogenesis control. This chain is GTPase Obg, found in Bradyrhizobium sp. (strain ORS 278).